An 81-amino-acid polypeptide reads, in one-letter code: Small ribosomal subunit protein bS18 (81 aa).

Belongs to the bacterial ribosomal protein bS18 family. In terms of assembly, part of the 30S ribosomal subunit. Forms a tight heterodimer with protein bS6.

Its function is as follows. Binds as a heterodimer with protein bS6 to the central domain of the 16S rRNA, where it helps stabilize the platform of the 30S subunit. This is Small ribosomal subunit protein bS18 from Parvibaculum lavamentivorans (strain DS-1 / DSM 13023 / NCIMB 13966).